A 147-amino-acid chain; its full sequence is Large ribosomal subunit protein bL9 (147 aa).

This sequence belongs to the bacterial ribosomal protein bL9 family.

Its function is as follows. Binds to the 23S rRNA. This is Large ribosomal subunit protein bL9 from Clostridium botulinum (strain 657 / Type Ba4).